A 244-amino-acid polypeptide reads, in one-letter code: MAKVTMRQMLEAGVHFGHQTRYWNPKMGEYIFGARNKIHIVNLEKTLPMFNDALNFLGGIAAKKGTVLFVGTKRAAGDLVAQEAKRCGMPYVNHRWLGGMLTNFKTIKQSIKNLKDLEVQEQDGTFEKITKKEALMRSRQKAKLELSLGGIKDMRAMPDAIFIIDTGNEKIAIQEAKNLGIPVVGVVDTNNDPNGVDYVIPGNDDAVRAVSLYLSAAADAINEGKGSITTAVEGDEFVEEKAEA.

The protein belongs to the universal ribosomal protein uS2 family.

This is Small ribosomal subunit protein uS2 from Hydrogenovibrio crunogenus (strain DSM 25203 / XCL-2) (Thiomicrospira crunogena).